A 299-amino-acid polypeptide reads, in one-letter code: Recombination-associated protein RdgC (299 aa).

It belongs to the RdgC family.

The protein resides in the cytoplasm. It localises to the nucleoid. Its function is as follows. May be involved in recombination. The polypeptide is Recombination-associated protein RdgC (Neisseria meningitidis serogroup A / serotype 4A (strain DSM 15465 / Z2491)).